Here is a 150-residue protein sequence, read N- to C-terminus: Troponin C, isoform 2A (150 aa).

Position 1 is an N-acetylmethionine (Met1). 4 consecutive EF-hand domains span residues 7 to 42, 43 to 78, 83 to 118, and 119 to 150; these read EQIG…MGVK, ISEK…FLIE, ALKT…LDNR, and LTEE…MMNG. Asp56, Asp58, Ser60, Glu62, and Glu67 together coordinate Ca(2+). Ca(2+) is bound by residues Asp132, Asp134, Ser136, Thr138, and Glu143.

It belongs to the troponin C family.

Its function is as follows. Troponin is the central regulatory protein of striated muscle contraction. Tn consists of three components: Tn-I which is the inhibitor of actomyosin ATPase, Tn-T which contains the binding site for tropomyosin and Tn-C. The binding of calcium to Tn-C abolishes the inhibitory action of Tn on actin filaments. The polypeptide is Troponin C, isoform 2A (Homarus americanus (American lobster)).